A 157-amino-acid polypeptide reads, in one-letter code: Phosphomannomutase (157 aa).

Ser-98 (phosphoserine intermediate) is an active-site residue. A Mg(2+)-binding site is contributed by Ser-98.

It belongs to the phosphohexose mutase family. Requires Mg(2+) as cofactor.

It carries out the reaction alpha-D-mannose 1-phosphate = D-mannose 6-phosphate. It functions in the pathway nucleotide-sugar biosynthesis; GDP-alpha-D-mannose biosynthesis; alpha-D-mannose 1-phosphate from D-fructose 6-phosphate: step 2/2. Its pathway is capsule biogenesis; capsule polysaccharide biosynthesis. Functionally, involved in the biosynthesis of the K2 capsular polysaccharide biosynthesis. The protein is Phosphomannomutase (manB) of Klebsiella pneumoniae.